Here is an 88-residue protein sequence, read N- to C-terminus: CLAVATA3/ESR (CLE)-related protein 42 (88 aa).

Positions 1 to 24 (MRSPHITISLVFLFFLFLIIQTHQ) are cleaved as a signal peptide. Positions 69-88 (KMIGANEHGVPSGPNPISNR) are disordered. Pro-79 and Pro-82 each carry hydroxyproline. Residue Pro-82 is glycosylated (O-linked (Ara...) hydroxyproline).

It belongs to the CLV3/ESR signal peptide family. Post-translationally, the O-glycosylation (arabinosylation) of the hydroxyproline Pro-82 enhances binding affinity of the CLE42p peptide for its receptor. As to expression, expressed at low levels in seedlings, roots and inflorescence.

The protein localises to the secreted. The protein resides in the extracellular space. Extracellular signal peptide that regulates cell fate. Represses tracheary element differentiation but promotes the formation of procambial cells. This chain is CLAVATA3/ESR (CLE)-related protein 42, found in Arabidopsis thaliana (Mouse-ear cress).